Here is a 278-residue protein sequence, read N- to C-terminus: Myb/SANT-like DNA-binding domain-containing protein 1 (278 aa).

The Myb-like domain occupies 44 to 131; that stretch reads RNWTDAEMRG…WPYYLAIDRI (88 aa). Residues 139 to 167 are disordered; it reads CEGKLPDGQQPGPSTSQTEASLSPSAKST. Polar residues predominate over residues 149–166; sequence PGPSTSQTEASLSPSAKS.

In Mus musculus (Mouse), this protein is Myb/SANT-like DNA-binding domain-containing protein 1 (Msantd1).